We begin with the raw amino-acid sequence, 121 residues long: Small ribosomal subunit protein uS12c (121 aa).

It belongs to the universal ribosomal protein uS12 family. As to quaternary structure, part of the 30S ribosomal subunit.

The protein localises to the plastid. It localises to the apicoplast. With S4 and S5 plays an important role in translational accuracy. Located at the interface of the 30S and 50S subunits. In Toxoplasma gondii, this protein is Small ribosomal subunit protein uS12c (rps12).